We begin with the raw amino-acid sequence, 251 residues long: Flap endonuclease Xni (251 aa).

Asp104 lines the Mg(2+) pocket. Positions 160-249 constitute a 5'-3' exonuclease domain; sequence VLPRQLPDYW…IDGNLQQLRL (90 aa). K(+) is bound by residues Leu171, Ala172, Pro180, Val182, and Ile185. The interaction with DNA stretch occupies residues 184-189; the sequence is GIGPKS.

Belongs to the Xni family. It depends on Mg(2+) as a cofactor. K(+) serves as cofactor.

Functionally, has flap endonuclease activity. During DNA replication, flap endonucleases cleave the 5'-overhanging flap structure that is generated by displacement synthesis when DNA polymerase encounters the 5'-end of a downstream Okazaki fragment. This Salmonella schwarzengrund (strain CVM19633) protein is Flap endonuclease Xni.